Here is a 306-residue protein sequence, read N- to C-terminus: Elongation factor Ts (306 aa).

Residues 80–83 form an involved in Mg(2+) ion dislocation from EF-Tu region; it reads TDFV.

Belongs to the EF-Ts family.

The protein localises to the cytoplasm. Functionally, associates with the EF-Tu.GDP complex and induces the exchange of GDP to GTP. It remains bound to the aminoacyl-tRNA.EF-Tu.GTP complex up to the GTP hydrolysis stage on the ribosome. This Clostridium acetobutylicum (strain ATCC 824 / DSM 792 / JCM 1419 / IAM 19013 / LMG 5710 / NBRC 13948 / NRRL B-527 / VKM B-1787 / 2291 / W) protein is Elongation factor Ts.